Reading from the N-terminus, the 466-residue chain is Asparagine--tRNA ligase (466 aa).

The protein belongs to the class-II aminoacyl-tRNA synthetase family. Homodimer.

Its subcellular location is the cytoplasm. It catalyses the reaction tRNA(Asn) + L-asparagine + ATP = L-asparaginyl-tRNA(Asn) + AMP + diphosphate + H(+). In Escherichia coli O139:H28 (strain E24377A / ETEC), this protein is Asparagine--tRNA ligase.